The chain runs to 119 residues: Large ribosomal subunit protein uL22 (119 aa).

It belongs to the universal ribosomal protein uL22 family. In terms of assembly, part of the 50S ribosomal subunit.

This protein binds specifically to 23S rRNA; its binding is stimulated by other ribosomal proteins, e.g. L4, L17, and L20. It is important during the early stages of 50S assembly. It makes multiple contacts with different domains of the 23S rRNA in the assembled 50S subunit and ribosome. In terms of biological role, the globular domain of the protein is located near the polypeptide exit tunnel on the outside of the subunit, while an extended beta-hairpin is found that lines the wall of the exit tunnel in the center of the 70S ribosome. This Rickettsia conorii (strain ATCC VR-613 / Malish 7) protein is Large ribosomal subunit protein uL22.